A 246-amino-acid polypeptide reads, in one-letter code: UDP-N-acetyl-D-mannosaminuronic acid transferase (246 aa).

It belongs to the glycosyltransferase 26 family.

The catalysed reaction is UDP-N-acetyl-alpha-D-mannosaminouronate + N-acetyl-alpha-D-glucosaminyl-di-trans,octa-cis-undecaprenyl diphosphate = beta-D-ManNAcA-(1-&gt;4)-alpha-D-GlcNAc-di-trans,octa-cis-undecaprenyl diphosphate + UDP + H(+). The protein operates within bacterial outer membrane biogenesis; enterobacterial common antigen biosynthesis. Its function is as follows. Catalyzes the synthesis of Und-PP-GlcNAc-ManNAcA (Lipid II), the second lipid-linked intermediate involved in enterobacterial common antigen (ECA) synthesis. In Salmonella dublin (strain CT_02021853), this protein is UDP-N-acetyl-D-mannosaminuronic acid transferase.